A 334-amino-acid polypeptide reads, in one-letter code: Glycerol-3-phosphate dehydrogenase [NAD(P)+] (334 aa).

Trp13, Arg33, and Lys106 together coordinate NADPH. Sn-glycerol 3-phosphate contacts are provided by Lys106, Gly137, and Ser139. An NADPH-binding site is contributed by Ala141. Positions 192, 245, 255, 256, and 257 each coordinate sn-glycerol 3-phosphate. The active-site Proton acceptor is the Lys192. Arg256 provides a ligand contact to NADPH. Positions 280 and 282 each coordinate NADPH.

The protein belongs to the NAD-dependent glycerol-3-phosphate dehydrogenase family.

The protein localises to the cytoplasm. The catalysed reaction is sn-glycerol 3-phosphate + NAD(+) = dihydroxyacetone phosphate + NADH + H(+). The enzyme catalyses sn-glycerol 3-phosphate + NADP(+) = dihydroxyacetone phosphate + NADPH + H(+). The protein operates within membrane lipid metabolism; glycerophospholipid metabolism. Its function is as follows. Catalyzes the reduction of the glycolytic intermediate dihydroxyacetone phosphate (DHAP) to sn-glycerol 3-phosphate (G3P), the key precursor for phospholipid synthesis. This is Glycerol-3-phosphate dehydrogenase [NAD(P)+] from Chlamydia trachomatis serovar A (strain ATCC VR-571B / DSM 19440 / HAR-13).